A 686-amino-acid chain; its full sequence is Alpha-amylase 1 (686 aa).

The active-site Nucleophile is E125. The Proton donor role is filled by D216.

Belongs to the glycosyl hydrolase 57 family.

The protein resides in the cytoplasm. The catalysed reaction is Endohydrolysis of (1-&gt;4)-alpha-D-glucosidic linkages in polysaccharides containing three or more (1-&gt;4)-alpha-linked D-glucose units.. Its function is as follows. This amylase is a highly liquefying-type: oligomers appeared at the beginning of incubation, followed by a graded decrease in the amounts of maltotriose, maltose and glucose in prolonged incubation. The chain is Alpha-amylase 1 (amyA) from Dictyoglomus thermophilum (strain ATCC 35947 / DSM 3960 / H-6-12).